Reading from the N-terminus, the 169-residue chain is Aspartic protease inhibitor 6 (169 aa).

An N-linked (GlcNAc...) asparagine glycan is attached at asparagine 1. 2 disulfides stabilise this stretch: cysteine 30–cysteine 75 and cysteine 124–cysteine 134.

The protein belongs to the protease inhibitor I3 (leguminous Kunitz-type inhibitor) family.

The protein localises to the vacuole. Inhibitor of cathepsin D (aspartic protease). May also inhibit trypsin and chymotrypsin (serine proteases). Protects the plant by inhibiting proteases of invading organisms. The polypeptide is Aspartic protease inhibitor 6 (Solanum tuberosum (Potato)).